The following is a 341-amino-acid chain: Dimethylsulfoniopropionate lyase 7 (341 aa).

Basic and acidic residues-rich tracts occupy residues 1–10 (MAGKDRKTIE) and 319–328 (ERKLAKDRQK). Disordered stretches follow at residues 1-24 (MAGK…GGRF) and 319-341 (ERKL…AFDA).

Belongs to the aspartate/glutamate racemases family. ALMA1 subfamily. Homotetramer.

The catalysed reaction is S,S-dimethyl-beta-propiothetin = acrylate + dimethyl sulfide + H(+). Its function is as follows. Mediates cleavage of dimethylsulfoniopropionate (DMSP) into dimethyl sulfide (DMS) and acrylate. DMS is the principal form by which sulfur is transported from oceans to the atmosphere and is a key component of the ocean sulfur cycle. This Emiliania huxleyi (strain CCMP1516) protein is Dimethylsulfoniopropionate lyase 7.